The primary structure comprises 104 residues: ATLAPTVLIFPPSPAELATGTATIVCVANKYFPDGTVTWQVDGKPLTTGIETSKTPQNSDDCTYNLSSTLTLKSDEYNSHDEYTCQVAQGSGSPVVQSFSRKNC.

The Ig-like domain occupies P5–S100. Residues C26 and C85 are joined by a disulfide bond.

This chain is Ig kappa chain b5 variant C region, found in Oryctolagus cuniculus (Rabbit).